The following is a 314-amino-acid chain: Methionyl-tRNA formyltransferase (314 aa).

(6S)-5,6,7,8-tetrahydrofolate is bound at residue 113-116 (SLLP).

Belongs to the Fmt family.

It catalyses the reaction L-methionyl-tRNA(fMet) + (6R)-10-formyltetrahydrofolate = N-formyl-L-methionyl-tRNA(fMet) + (6S)-5,6,7,8-tetrahydrofolate + H(+). Its function is as follows. Attaches a formyl group to the free amino group of methionyl-tRNA(fMet). The formyl group appears to play a dual role in the initiator identity of N-formylmethionyl-tRNA by promoting its recognition by IF2 and preventing the misappropriation of this tRNA by the elongation apparatus. This chain is Methionyl-tRNA formyltransferase, found in Pseudomonas syringae pv. syringae (strain B728a).